A 109-amino-acid polypeptide reads, in one-letter code: MGSLIIEDLQESFGKEAVKGKEITVHYTGWLEDGTKFDSSLDRRQPLTITLGVGQVIKGWDEGFGGMKEGGKRKLTIPSEMGYGAHGAGGVIPPHATLIFEVELLKVYE.

The region spanning G20–Y108 is the PPIase FKBP-type domain.

The protein belongs to the FKBP-type PPIase family.

The enzyme catalyses [protein]-peptidylproline (omega=180) = [protein]-peptidylproline (omega=0). Functionally, PPIases accelerate the folding of proteins. The chain is FK506-binding protein (fbp) from Neisseria meningitidis serogroup C.